We begin with the raw amino-acid sequence, 370 residues long: 3-isopropylmalate dehydrogenase (370 aa).

77 to 90 lines the NAD(+) pocket; that stretch reads GPKWDAVPYDARPE. Substrate is bound by residues Arg-97, Arg-107, Arg-135, and Asp-226. Mg(2+)-binding residues include Asp-226, Asp-250, and Asp-254. 290 to 302 contacts NAD(+); sequence GSAPDIAGKGLAN.

The protein belongs to the isocitrate and isopropylmalate dehydrogenases family. LeuB type 1 subfamily. Homodimer. The cofactor is Mg(2+). Mn(2+) serves as cofactor.

It is found in the cytoplasm. The enzyme catalyses (2R,3S)-3-isopropylmalate + NAD(+) = 4-methyl-2-oxopentanoate + CO2 + NADH. It participates in amino-acid biosynthesis; L-leucine biosynthesis; L-leucine from 3-methyl-2-oxobutanoate: step 3/4. Functionally, catalyzes the oxidation of 3-carboxy-2-hydroxy-4-methylpentanoate (3-isopropylmalate) to 3-carboxy-4-methyl-2-oxopentanoate. The product decarboxylates to 4-methyl-2 oxopentanoate. This is 3-isopropylmalate dehydrogenase from Rhodopseudomonas palustris (strain HaA2).